A 351-amino-acid chain; its full sequence is MSANKKVRGEIMGISEREKLVLNAIVDYYLTVGDTIGSRTLVKKYGIELSSATIRNVMADLEDMGFIEKTHTSSGRIPTDMGYKYYLTELLKVEKITQEEIENISNVYNRRVDELENILKKTSTLLSKLTNYAGIAVEPKPDNKKVSRVELVYIDEYLVMAIIVMDDRRVKTKNIHLAYPISKEEVEKKVDELNAKIRNNEIAINDIEKFFTESTDIVYEYDDEDELSKYFINNLPSMLKNENIAEVTDVIEFFNERKDIRELFEKLIEQKAQENSKSNVNVILGDELGIKELEDFSFVYSIYDIGGAQGIIGVMGPKRMAYSKTMGLINHVSREVNKLINSMEKDKNKKV.

This sequence belongs to the HrcA family.

Its function is as follows. Negative regulator of class I heat shock genes (grpE-dnaK-dnaJ and groELS operons). Prevents heat-shock induction of these operons. This chain is Heat-inducible transcription repressor HrcA, found in Fusobacterium nucleatum subsp. nucleatum (strain ATCC 25586 / DSM 15643 / BCRC 10681 / CIP 101130 / JCM 8532 / KCTC 2640 / LMG 13131 / VPI 4355).